We begin with the raw amino-acid sequence, 512 residues long: Glutathione-binding protein GsiB (512 aa).

An N-terminal signal peptide occupies residues 1–26 (MARAVHRSGLVALGIATALMASCAFA).

Belongs to the bacterial solute-binding protein 5 family. As to quaternary structure, the complex is composed of two ATP-binding proteins (GsiA), two transmembrane proteins (GsiC and GsiD) and a solute-binding protein (GsiB).

Its subcellular location is the periplasm. Functionally, part of the ABC transporter complex GsiABCD involved in glutathione import. Binds glutathione. This Escherichia coli O157:H7 protein is Glutathione-binding protein GsiB.